The primary structure comprises 130 residues: NADH-quinone oxidoreductase subunit A (130 aa).

Transmembrane regions (helical) follow at residues A15–I35, F67–A87, and W95–L115.

This sequence belongs to the complex I subunit 3 family. As to quaternary structure, NDH-1 is composed of 14 different subunits. Subunits NuoA, H, J, K, L, M, N constitute the membrane sector of the complex.

It localises to the cell inner membrane. It catalyses the reaction a quinone + NADH + 5 H(+)(in) = a quinol + NAD(+) + 4 H(+)(out). NDH-1 shuttles electrons from NADH, via FMN and iron-sulfur (Fe-S) centers, to quinones in the respiratory chain. The immediate electron acceptor for the enzyme in this species is believed to be ubiquinone. Couples the redox reaction to proton translocation (for every two electrons transferred, four hydrogen ions are translocated across the cytoplasmic membrane), and thus conserves the redox energy in a proton gradient. The polypeptide is NADH-quinone oxidoreductase subunit A (Rhodopseudomonas palustris (strain BisA53)).